Here is a 248-residue protein sequence, read N- to C-terminus: Tryptophan synthase alpha chain (248 aa).

Residues E36 and D47 each act as proton acceptor in the active site.

It belongs to the TrpA family. As to quaternary structure, tetramer of two alpha and two beta chains.

It catalyses the reaction (1S,2R)-1-C-(indol-3-yl)glycerol 3-phosphate + L-serine = D-glyceraldehyde 3-phosphate + L-tryptophan + H2O. It functions in the pathway amino-acid biosynthesis; L-tryptophan biosynthesis; L-tryptophan from chorismate: step 5/5. Functionally, the alpha subunit is responsible for the aldol cleavage of indoleglycerol phosphate to indole and glyceraldehyde 3-phosphate. This Pyrococcus furiosus (strain ATCC 43587 / DSM 3638 / JCM 8422 / Vc1) protein is Tryptophan synthase alpha chain.